The primary structure comprises 123 residues: Cholecystokinin A (123 aa).

An N-terminal signal peptide occupies residues 1–20 (MYSGICICLLLAMLSASSKA). Positions 21 to 103 (HQSEDAVVTE…FDQPHRINDR (83 aa)) are excised as a propeptide. Tyrosine 105 carries the post-translational modification Sulfotyrosine. Phenylalanine 111 carries the post-translational modification Phenylalanine amide. The propeptide occupies 115–123 (SAEEYEYSS).

It belongs to the gastrin/cholecystokinin family. Post-translationally, the precursor is cleaved by proteases to produce a number of active cholecystokinins. In terms of tissue distribution, brain, gastrointestinal tract and lung.

The protein localises to the secreted. This chain is Cholecystokinin A (cck-a), found in Xenopus laevis (African clawed frog).